A 99-amino-acid chain; its full sequence is Small ribosomal subunit protein bS20 (99 aa).

It belongs to the bacterial ribosomal protein bS20 family.

Binds directly to 16S ribosomal RNA. This is Small ribosomal subunit protein bS20 from Chlamydia pneumoniae (Chlamydophila pneumoniae).